The chain runs to 180 residues: Inner membrane-spanning protein YciB (180 aa).

A run of 6 helical transmembrane segments spans residues 4-24, 25-45, 49-69, 76-96, 118-138, and 150-170; these read LLSEIGPVIAFFAGFFYGGGI, QHATLYMLITSVICITLCYVI, VSKLSIISTTVLLVSGSITLI, IKIKPTILYVIFGIIFLMSGI, ITLSYRTAAFFFFMAVVNEVV, and FKVFGVIPITFIFILLQLPLL.

This sequence belongs to the YciB family.

Its subcellular location is the cell inner membrane. Its function is as follows. Plays a role in cell envelope biogenesis, maintenance of cell envelope integrity and membrane homeostasis. This Rickettsia africae (strain ESF-5) protein is Inner membrane-spanning protein YciB.